We begin with the raw amino-acid sequence, 259 residues long: Ribonuclease PH (259 aa).

Phosphate-binding positions include Arg-88 and 126–128 (GTR).

The protein belongs to the RNase PH family. As to quaternary structure, homohexameric ring arranged as a trimer of dimers.

It carries out the reaction tRNA(n+1) + phosphate = tRNA(n) + a ribonucleoside 5'-diphosphate. Phosphorolytic 3'-5' exoribonuclease that plays an important role in tRNA 3'-end maturation. Removes nucleotide residues following the 3'-CCA terminus of tRNAs; can also add nucleotides to the ends of RNA molecules by using nucleoside diphosphates as substrates, but this may not be physiologically important. Probably plays a role in initiation of 16S rRNA degradation (leading to ribosome degradation) during starvation. The chain is Ribonuclease PH from Mycolicibacterium paratuberculosis (strain ATCC BAA-968 / K-10) (Mycobacterium paratuberculosis).